An 88-amino-acid polypeptide reads, in one-letter code: Putative membrane protein insertion efficiency factor (88 aa).

The disordered stretch occupies residues 68–88; sequence VPPPNSDTRARGEADARSHRL. Basic and acidic residues predominate over residues 75-88; that stretch reads TRARGEADARSHRL.

This sequence belongs to the UPF0161 family.

It is found in the cell inner membrane. In terms of biological role, could be involved in insertion of integral membrane proteins into the membrane. In Burkholderia cenocepacia (strain ATCC BAA-245 / DSM 16553 / LMG 16656 / NCTC 13227 / J2315 / CF5610) (Burkholderia cepacia (strain J2315)), this protein is Putative membrane protein insertion efficiency factor.